Consider the following 1622-residue polypeptide: FK506-binding protein 5 (1622 aa).

In terms of domain architecture, PPIase FKBP-type spans 178–269 (GDRVSIKYAG…IFDLEVTGSK (92 aa)). Residues 268-306 (SKKKEGSEPSLPSLNGQPSNAPQQSLPTQLFDNSPVPQD) are disordered. Residues 277-303 (SLPSLNGQPSNAPQQSLPTQLFDNSPV) show a composition bias toward polar residues. Omega-N-methylarginine is present on Arg314. Disordered regions lie at residues 320 to 432 (RATG…GFNN) and 518 to 538 (SPPPPVQQAPPPTPAPAPPPP). The segment covering 335–432 (ESNSRNSHSN…NMNNNNGFNN (98 aa)) has biased composition (low complexity). Coiled coils occupy residues 607 to 827 (LVQT…ETER) and 854 to 961 (KKEE…LESQ). 2 disordered regions span residues 1043–1097 (KQQQ…EVVV) and 1122–1622 (EEVK…VLPL). Composition is skewed to acidic residues over residues 1050 to 1093 (KEEE…EEEK) and 1152 to 1168 (DDEDDDDDEDDYDDINE). The span at 1169–1182 (EDLKNIDAEIEKMQ) shows a compositional bias: basic and acidic residues. Acidic residues-rich tracts occupy residues 1185 to 1199 (MGDELEDDDDEEEEK) and 1222 to 1260 (ESEEEEEEETKVEVPVLEEEKEEEETKVEVPVLEDEQED). The span at 1261-1271 (KVESDVEEKIV) shows a compositional bias: basic and acidic residues. The span at 1320–1335 (DDDEDNEKDVASDSEE) shows a compositional bias: acidic residues. A compositionally biased stretch (basic and acidic residues) spans 1353-1369 (EEKVVEQVKEEINETKF). The segment covering 1380–1412 (TTTEEKEEEKEEEKVEEEEEKVVEPPTIDDDET) has biased composition (acidic residues). Low complexity-rich tracts occupy residues 1435–1449 (STTAATTSTTTTSST) and 1465–1504 (KTSFFDFDDSPFSAETETETKSTAASSDPFADTTSSTPTS). Polar residues-rich tracts occupy residues 1519–1532 (FGNSSDIFDKPSTT) and 1581–1609 (AKSNNNTPSRQKQDFSSLFGSDPTISPLT).

Belongs to the FKBP-type PPIase family.

The enzyme catalyses [protein]-peptidylproline (omega=180) = [protein]-peptidylproline (omega=0). With respect to regulation, inhibited by both FK506 and rapamycin. Its function is as follows. PPIases accelerate the folding of proteins by catalyzing the cis-trans isomerization of proline imidic peptide bonds in oligopeptides. This Dictyostelium discoideum (Social amoeba) protein is FK506-binding protein 5 (fkbp5).